Consider the following 211-residue polypeptide: Pyridoxine/pyridoxamine 5'-phosphate oxidase (211 aa).

Substrate is bound by residues 7–10 (RTDY) and lysine 65. Residues 60–65 (RIVLIK), 75–76 (FT), arginine 81, and lysine 82 each bind FMN. Residues tyrosine 122, arginine 126, and serine 130 each coordinate substrate. Residues 139–140 (QS) and tryptophan 183 each bind FMN. 189–191 (RLH) contacts substrate. Arginine 193 contacts FMN.

Belongs to the pyridoxamine 5'-phosphate oxidase family. Homodimer. It depends on FMN as a cofactor.

The enzyme catalyses pyridoxamine 5'-phosphate + O2 + H2O = pyridoxal 5'-phosphate + H2O2 + NH4(+). It carries out the reaction pyridoxine 5'-phosphate + O2 = pyridoxal 5'-phosphate + H2O2. It participates in cofactor metabolism; pyridoxal 5'-phosphate salvage; pyridoxal 5'-phosphate from pyridoxamine 5'-phosphate: step 1/1. The protein operates within cofactor metabolism; pyridoxal 5'-phosphate salvage; pyridoxal 5'-phosphate from pyridoxine 5'-phosphate: step 1/1. Catalyzes the oxidation of either pyridoxine 5'-phosphate (PNP) or pyridoxamine 5'-phosphate (PMP) into pyridoxal 5'-phosphate (PLP). This is Pyridoxine/pyridoxamine 5'-phosphate oxidase from Herminiimonas arsenicoxydans.